A 437-amino-acid polypeptide reads, in one-letter code: tRNA-2-methylthio-N(6)-dimethylallyladenosine synthase (437 aa).

One can recognise an MTTase N-terminal domain in the interval 1–115 (MKVYIETMGC…ISQVIHKEKA (115 aa)). Residues Cys-10, Cys-46, Cys-78, Cys-148, Cys-152, and Cys-155 each contribute to the [4Fe-4S] cluster site. Residues 134 to 367 (KKAQIRSLLN…QNRHKEILEE (234 aa)) enclose the Radical SAM core domain. In terms of domain architecture, TRAM spans 370 to 436 (KLEVGKTHVV…KGRLMAATKG (67 aa)).

Belongs to the methylthiotransferase family. MiaB subfamily. As to quaternary structure, monomer. [4Fe-4S] cluster is required as a cofactor.

It is found in the cytoplasm. It catalyses the reaction N(6)-dimethylallyladenosine(37) in tRNA + (sulfur carrier)-SH + AH2 + 2 S-adenosyl-L-methionine = 2-methylsulfanyl-N(6)-dimethylallyladenosine(37) in tRNA + (sulfur carrier)-H + 5'-deoxyadenosine + L-methionine + A + S-adenosyl-L-homocysteine + 2 H(+). Its function is as follows. Catalyzes the methylthiolation of N6-(dimethylallyl)adenosine (i(6)A), leading to the formation of 2-methylthio-N6-(dimethylallyl)adenosine (ms(2)i(6)A) at position 37 in tRNAs that read codons beginning with uridine. This Helicobacter pylori (strain ATCC 700392 / 26695) (Campylobacter pylori) protein is tRNA-2-methylthio-N(6)-dimethylallyladenosine synthase.